A 1045-amino-acid chain; its full sequence is Extracellular serine protease (1045 aa).

A signal peptide spans 1–27 (MILNKRLKLAYCVFLGCYGLSIHSSLA). Residues 49–397 (QWGLEAISAE…WGRVNLRDAI (349 aa)) enclose the Peptidase S8 domain. Catalysis depends on charge relay system residues D76, H112, and S341. A propeptide spans 646–1045 (SLASTENEKA…SVNAGLTWRF (400 aa)) (translocator domain; removed in mature form). In terms of domain architecture, Autotransporter spans 769-1045 (IKADDNGAWA…SVNAGLTWRF (277 aa)).

This sequence belongs to the peptidase S8 family.

It localises to the secreted. This chain is Extracellular serine protease, found in Serratia marcescens.